The primary structure comprises 408 residues: Formate-dependent phosphoribosylglycinamide formyltransferase (408 aa).

Residues 25–26 (EL) and Glu-85 each bind N(1)-(5-phospho-beta-D-ribosyl)glycinamide. ATP-binding positions include Arg-118, Lys-159, 164-169 (SSGKGQ), 199-202 (EAFV), and Glu-207. Positions 123 to 318 (KLAAEELGLP…EFELHAKAIL (196 aa)) constitute an ATP-grasp domain. Glu-277 and Glu-289 together coordinate Mg(2+). N(1)-(5-phospho-beta-D-ribosyl)glycinamide-binding positions include Asp-296, Lys-365, and 372–373 (RR).

The protein belongs to the PurK/PurT family. Homodimer.

It carries out the reaction N(1)-(5-phospho-beta-D-ribosyl)glycinamide + formate + ATP = N(2)-formyl-N(1)-(5-phospho-beta-D-ribosyl)glycinamide + ADP + phosphate + H(+). It participates in purine metabolism; IMP biosynthesis via de novo pathway; N(2)-formyl-N(1)-(5-phospho-D-ribosyl)glycinamide from N(1)-(5-phospho-D-ribosyl)glycinamide (formate route): step 1/1. Its function is as follows. Involved in the de novo purine biosynthesis. Catalyzes the transfer of formate to 5-phospho-ribosyl-glycinamide (GAR), producing 5-phospho-ribosyl-N-formylglycinamide (FGAR). Formate is provided by PurU via hydrolysis of 10-formyl-tetrahydrofolate. The polypeptide is Formate-dependent phosphoribosylglycinamide formyltransferase (Corynebacterium glutamicum (strain R)).